A 336-amino-acid chain; its full sequence is Tetraacyldisaccharide 4'-kinase (336 aa).

60 to 67 contributes to the ATP binding site; it reads TVGGTGKT.

Belongs to the LpxK family.

The enzyme catalyses a lipid A disaccharide + ATP = a lipid IVA + ADP + H(+). The protein operates within glycolipid biosynthesis; lipid IV(A) biosynthesis; lipid IV(A) from (3R)-3-hydroxytetradecanoyl-[acyl-carrier-protein] and UDP-N-acetyl-alpha-D-glucosamine: step 6/6. Transfers the gamma-phosphate of ATP to the 4'-position of a tetraacyldisaccharide 1-phosphate intermediate (termed DS-1-P) to form tetraacyldisaccharide 1,4'-bis-phosphate (lipid IVA). In Pseudomonas entomophila (strain L48), this protein is Tetraacyldisaccharide 4'-kinase.